The chain runs to 220 residues: Type-4 uracil-DNA glycosylase (220 aa).

2 residues coordinate [4Fe-4S] cluster: cysteine 14 and cysteine 17. Residues glycine 41 to alanine 43, phenylalanine 55, and asparagine 82 each bind uracil. Cysteine 86 and cysteine 102 together coordinate [4Fe-4S] cluster. A uracil-binding site is contributed by histidine 164.

The protein belongs to the uracil-DNA glycosylase (UDG) superfamily. Type 4 (UDGa) family.

It carries out the reaction Hydrolyzes single-stranded DNA or mismatched double-stranded DNA and polynucleotides, releasing free uracil.. Removes uracil bases that are present in DNA as a result of either deamination of cytosine or misincorporation of dUMP instead of dTMP. The sequence is that of Type-4 uracil-DNA glycosylase from Sulfurisphaera tokodaii (strain DSM 16993 / JCM 10545 / NBRC 100140 / 7) (Sulfolobus tokodaii).